The following is a 900-amino-acid chain: Protein translocase subunit SecA (900 aa).

ATP-binding positions include Q87, 105 to 109, and D512; that span reads GEGKT. The interval 849 to 900 is disordered; that stretch reads ERLAQQQQFSHQEEDSLNTGSPAQADRKIGRNDPCPCGSGKKYKQCHGRLQK. Zn(2+) contacts are provided by C883, C885, C894, and H895. Positions 889-900 are enriched in basic residues; it reads KKYKQCHGRLQK.

It belongs to the SecA family. Monomer and homodimer. Part of the essential Sec protein translocation apparatus which comprises SecA, SecYEG and auxiliary proteins SecDF-YajC and YidC. Requires Zn(2+) as cofactor.

The protein resides in the cell inner membrane. It localises to the cytoplasm. It catalyses the reaction ATP + H2O + cellular proteinSide 1 = ADP + phosphate + cellular proteinSide 2.. Its function is as follows. Part of the Sec protein translocase complex. Interacts with the SecYEG preprotein conducting channel. Has a central role in coupling the hydrolysis of ATP to the transfer of proteins into and across the cell membrane, serving both as a receptor for the preprotein-SecB complex and as an ATP-driven molecular motor driving the stepwise translocation of polypeptide chains across the membrane. The protein is Protein translocase subunit SecA of Pectobacterium atrosepticum (strain SCRI 1043 / ATCC BAA-672) (Erwinia carotovora subsp. atroseptica).